A 377-amino-acid polypeptide reads, in one-letter code: Nitric oxide reductase FlRd-NAD(+) reductase (377 aa).

It belongs to the FAD-dependent oxidoreductase family. FAD is required as a cofactor.

The protein localises to the cytoplasm. The catalysed reaction is 2 reduced [nitric oxide reductase rubredoxin domain] + NAD(+) + H(+) = 2 oxidized [nitric oxide reductase rubredoxin domain] + NADH. It participates in nitrogen metabolism; nitric oxide reduction. Its function is as follows. One of at least two accessory proteins for anaerobic nitric oxide (NO) reductase. Reduces the rubredoxin moiety of NO reductase. The sequence is that of Nitric oxide reductase FlRd-NAD(+) reductase from Escherichia coli (strain SMS-3-5 / SECEC).